A 225-amino-acid chain; its full sequence is Nuclear protein UL4 homolog (225 aa).

Belongs to the alphaherpesvirinae HHV-1 UL4 family.

Its subcellular location is the host nucleus. The protein is Nuclear protein UL4 homolog of Equus caballus (Horse).